Here is a 276-residue protein sequence, read N- to C-terminus: SKA complex subunit 1 homolog (276 aa).

The stretch at 48-78 forms a coiled coil; sequence VDVSLTAMEAQLQAVRRRLQEEREAFPKAKK.

It belongs to the SKA1 family.

This is SKA complex subunit 1 homolog from Oryza sativa subsp. indica (Rice).